A 123-amino-acid chain; its full sequence is DPEP2 neighbor protein (123 aa).

The tract at residues 67 to 123 is disordered; the sequence is APLATPTKAEAEKPAPRRAPKRRQATIESDKDLGCSSPKIRRLEHRGRRLTPQKLAG. Positions 105 to 117 are enriched in basic residues; it reads KIRRLEHRGRRLT.

This Homo sapiens (Human) protein is DPEP2 neighbor protein.